We begin with the raw amino-acid sequence, 616 residues long: Vitamin B12 transporter BtuB (616 aa).

The signal sequence occupies residues 1-20 (MIKKISLLTALSVTAFSGWA). A TonB box motif is present at residues 26–33 (DSLVVTAN). In terms of domain architecture, TBDR plug spans 38-152 (PVNTVLAPTS…IGGVVNIITT (115 aa)). Residues Leu83, Ser85, Asn92, and 110–111 (VT) contribute to the cyanocob(III)alamin site. One can recognise a TBDR beta-barrel domain in the interval 155–616 (KDGTTLNAGI…EYTLSGSYTF (462 aa)). Transmembrane regions (beta stranded) follow at residues 158 to 165 (TTLNAGIG), 169 to 178 (YQNYGGSTQQ), and 184 to 195 (TRVTLAGDYTYT). The Ca(2+) site is built by Asp199, Gln211, Asp213, and Asp215. The next 2 beta stranded transmembrane spans lie at 217–227 (FMNKTLYGALE) and 232–248 (DQWTGFVRGYGYSNRTA). Residues Tyr249, Asp250, and Asp263 each coordinate Ca(2+). Beta stranded transmembrane passes span 265–279 (RQLYSQTWDAGLRFN), 281–298 (DLFHSQLLSSYSHSKDYN), 311–327 (TLDEIKQYNVQWTNAVD), 330–339 (HGNIGAGVDW), 355–371 (YDLRNTGVYLTALQKFG), 373–383 (VTLEGAVRSDD), 387–402 (FGRHGTWQSSAAWEFI), 405–419 (YRFIASYGTAYKAPN), 436–445 (ESKQWEGAFE), 451–460 (VNWRVSAYRN), 475–492 (YYNVGKARIKGVEATASF), 496–511 (PLTHTLGYDYVDARNA), 519–531 (RRAKQQVKYQLDT), 537–552 (DWSLTYHYLGTRYDTD), 560–574 (NVKLGGVSLWDVAVS), 587–598 (IANLFDKDYETA), and 604–616 (AGREYTLSGSYTF). Thr311 contacts cyanocob(III)alamin. Arg519 is a cyanocob(III)alamin binding site. Positions 599–616 (YGYATAGREYTLSGSYTF) match the TonB C-terminal box motif.

It belongs to the TonB-dependent receptor family. BtuB (TC 1.B.14.3.1) subfamily.

It localises to the cell outer membrane. Functionally, involved in the active translocation of vitamin B12 (cyanocobalamin) across the outer membrane to the periplasmic space. It derives its energy for transport by interacting with the trans-periplasmic membrane protein TonB. The sequence is that of Vitamin B12 transporter BtuB from Cronobacter sakazakii (strain ATCC BAA-894) (Enterobacter sakazakii).